The primary structure comprises 85 residues: Elongation factor 1-beta (85 aa).

It belongs to the EF-1-beta/EF-1-delta family.

Functionally, promotes the exchange of GDP for GTP in EF-1-alpha/GDP, thus allowing the regeneration of EF-1-alpha/GTP that could then be used to form the ternary complex EF-1-alpha/GTP/AAtRNA. The protein is Elongation factor 1-beta of Methanosphaerula palustris (strain ATCC BAA-1556 / DSM 19958 / E1-9c).